The sequence spans 143 residues: UPF0102 protein Acid345_3985 (143 aa).

This sequence belongs to the UPF0102 family.

The protein is UPF0102 protein Acid345_3985 of Koribacter versatilis (strain Ellin345).